Consider the following 206-residue polypeptide: Large ribosomal subunit protein uL4 (206 aa).

Residues 43-78 (ARSGNRKQKDREEVKHTTKKPWRQKGTGRARAGMSS) are disordered. The span at 49 to 58 (KQKDREEVKH) shows a compositional bias: basic and acidic residues. Residues 59-70 (TTKKPWRQKGTG) are compositionally biased toward basic residues.

The protein belongs to the universal ribosomal protein uL4 family. Part of the 50S ribosomal subunit.

Functionally, one of the primary rRNA binding proteins, this protein initially binds near the 5'-end of the 23S rRNA. It is important during the early stages of 50S assembly. It makes multiple contacts with different domains of the 23S rRNA in the assembled 50S subunit and ribosome. Its function is as follows. Forms part of the polypeptide exit tunnel. The chain is Large ribosomal subunit protein uL4 from Cupriavidus pinatubonensis (strain JMP 134 / LMG 1197) (Cupriavidus necator (strain JMP 134)).